A 174-amino-acid chain; its full sequence is Large ribosomal subunit protein uL15 (174 aa).

Disordered stretches follow at residues M1–R56 and V150–A174. The span at R21–M35 shows a compositional bias: gly residues.

The protein belongs to the universal ribosomal protein uL15 family. Part of the 50S ribosomal subunit.

Binds to the 23S rRNA. This chain is Large ribosomal subunit protein uL15, found in Roseiflexus castenholzii (strain DSM 13941 / HLO8).